We begin with the raw amino-acid sequence, 202 residues long: dITP/XTP pyrophosphatase (202 aa).

Substrate is bound at residue 8 to 13 (TKNMGK). Mg(2+)-binding residues include E41 and D70. Residue D70 is the Proton acceptor of the active site. Substrate is bound by residues S71, 155-158 (FGYD), K178, and 183-184 (HR).

Belongs to the HAM1 NTPase family. Homodimer. Mg(2+) is required as a cofactor.

It catalyses the reaction XTP + H2O = XMP + diphosphate + H(+). The enzyme catalyses dITP + H2O = dIMP + diphosphate + H(+). The catalysed reaction is ITP + H2O = IMP + diphosphate + H(+). Pyrophosphatase that catalyzes the hydrolysis of nucleoside triphosphates to their monophosphate derivatives, with a high preference for the non-canonical purine nucleotides XTP (xanthosine triphosphate), dITP (deoxyinosine triphosphate) and ITP. Seems to function as a house-cleaning enzyme that removes non-canonical purine nucleotides from the nucleotide pool, thus preventing their incorporation into DNA/RNA and avoiding chromosomal lesions. The protein is dITP/XTP pyrophosphatase of Bacillus anthracis.